The primary structure comprises 291 residues: Sesquiterpene cyclase astC (291 aa).

This sequence belongs to the HAD-like hydrolase superfamily.

The enzyme catalyses (2E,6E)-farnesyl diphosphate = (S,S)-drim-8-en-11-yl diphosphate. The protein operates within secondary metabolite biosynthesis; terpenoid biosynthesis. In terms of biological role, sesquiterpene cyclase; part of the gene cluster that mediates the biosynthesis of astellolides, drimane-type sesquiterpene esters that show antimicrobial, anti-inflammatory, and anti-tumor activities. The first step in astellolide biosynthesis is performed by the sesquiterpene cyclase astC that catalyzes the formation of drimanyl pyrophosphate from farnesyl pyrophosphate. Drimanyl pyrophosphate is then dephosphorylated by the sesquiterpene phosphatase astI to produce drimanyl monophosphate which is further dephosphorylated to drim-8-ene-11-ol by atsK. Drim-8-ene-11-ol is converted to confertifolin, probably by the cytochrome P450 monooxygenase astD and/or the dehydrogenase astE. The cytochrome P450 monooxygenases astB, astF and astJ then hydroxylate confertifolin at C6, C14, or C15 to form trihydroxy confertifolin. The nonribosomal peptide synthetase astA catalyzes ester bond formation between trihydroxy contifolin and benzoic acid (BA) or 4-hydroxy benzoic acid (4HBA), leading to the formation of dideacetyl astellolides A and B, respectively. Finally, the O-acetyltransferase astG converts dideacetyl astellolides A and B into deacetyl astellolides A and B. The chain is Sesquiterpene cyclase astC from Aspergillus oryzae (strain ATCC 42149 / RIB 40) (Yellow koji mold).